A 218-amino-acid polypeptide reads, in one-letter code: OPA3-like protein (218 aa).

Residues 129 to 179 (NEIMEKQFVLQKKKNELQSSTEEIDSTEKDFDELHKVILKVERELHTLRQN) adopt a coiled-coil conformation. Positions 175–218 (TLRQNTPSQNEQAEATPSKEIPRETVSEKADHPPSSNTKSVSTG) are disordered. Over residues 176–189 (LRQNTPSQNEQAEA) the composition is skewed to polar residues. A compositionally biased stretch (basic and acidic residues) spans 194 to 206 (EIPRETVSEKADH). Over residues 208–218 (PSSNTKSVSTG) the composition is skewed to polar residues.

The protein belongs to the OPA3 family.

The protein is OPA3-like protein of Schizosaccharomyces pombe (strain 972 / ATCC 24843) (Fission yeast).